The following is a 74-amino-acid chain: Small ribosomal subunit protein eS17 (74 aa).

The protein belongs to the eukaryotic ribosomal protein eS17 family.

This Aeropyrum pernix (strain ATCC 700893 / DSM 11879 / JCM 9820 / NBRC 100138 / K1) protein is Small ribosomal subunit protein eS17.